The chain runs to 458 residues: UDP-N-acetylmuramate--L-alanine ligase (458 aa).

ATP is bound at residue 112–118 (GTHGKTT).

The protein belongs to the MurCDEF family.

It localises to the cytoplasm. The catalysed reaction is UDP-N-acetyl-alpha-D-muramate + L-alanine + ATP = UDP-N-acetyl-alpha-D-muramoyl-L-alanine + ADP + phosphate + H(+). It participates in cell wall biogenesis; peptidoglycan biosynthesis. Cell wall formation. This Geotalea daltonii (strain DSM 22248 / JCM 15807 / FRC-32) (Geobacter daltonii) protein is UDP-N-acetylmuramate--L-alanine ligase.